The sequence spans 138 residues: Transcription antitermination protein NusB (138 aa).

It belongs to the NusB family.

Functionally, involved in transcription antitermination. Required for transcription of ribosomal RNA (rRNA) genes. Binds specifically to the boxA antiterminator sequence of the ribosomal RNA (rrn) operons. This chain is Transcription antitermination protein NusB, found in Leptospira borgpetersenii serovar Hardjo-bovis (strain JB197).